The primary structure comprises 431 residues: Serine hydroxymethyltransferase 2 (431 aa).

(6S)-5,6,7,8-tetrahydrofolate-binding positions include leucine 131 and 135-137 (GHL). Position 240 is an N6-(pyridoxal phosphate)lysine (lysine 240). (6S)-5,6,7,8-tetrahydrofolate is bound at residue glutamate 256.

The protein belongs to the SHMT family. In terms of assembly, homodimer. It depends on pyridoxal 5'-phosphate as a cofactor.

It localises to the cytoplasm. It carries out the reaction (6R)-5,10-methylene-5,6,7,8-tetrahydrofolate + glycine + H2O = (6S)-5,6,7,8-tetrahydrofolate + L-serine. The protein operates within one-carbon metabolism; tetrahydrofolate interconversion. It functions in the pathway amino-acid biosynthesis; glycine biosynthesis; glycine from L-serine: step 1/1. Its function is as follows. Catalyzes the reversible interconversion of serine and glycine with tetrahydrofolate (THF) serving as the one-carbon carrier. This reaction serves as the major source of one-carbon groups required for the biosynthesis of purines, thymidylate, methionine, and other important biomolecules. Also exhibits THF-independent aldolase activity toward beta-hydroxyamino acids, producing glycine and aldehydes, via a retro-aldol mechanism. The sequence is that of Serine hydroxymethyltransferase 2 from Vibrio vulnificus (strain YJ016).